The sequence spans 459 residues: MARALRVPVALWLLGLCWSLAKAHPLARAPELGHGVEGGNVAKPDPEVTERCSDGWGFDATTLDEHGNMLFLKGEFVWKGHAWARQLISERWKDAPSPVDAAFRYDRNSVLLIKGDKFWVYPPEKGEEYPKLLQEKFPGIPFPLDAAVECHRGECSHEGVFFFQGNHTWFWDFSTKTIKKRSWPAVGNCSSAIRWLNRYYCFRGNKFLRFDPVTGEVNSTYPRDVRDYFMSCPNRGHAHRNATQHMDKRCSPHLVLSALLSDNHSATYAFSENHYWRLDSSRDGWHSWRIEHLWPQGPSTVDAAFLWDKKLYLIQGTQVYIFLTRAGYTLVKDYPKQLEKEFGSPDGVCLHSVDAAFTCPGSSQLYIMAGQKLWRLDLNLGAQATWTELPWLHTKVDGALCTEKSLGPHSCSANGLGLYLVQGPNLYCYKDVEELSKTKDLPQAQRMNSLLGCAPHQHS.

The signal sequence occupies residues 1–23 (MARALRVPVALWLLGLCWSLAKA). 3 disulfides stabilise this stretch: cysteine 52/cysteine 232, cysteine 150/cysteine 155, and cysteine 189/cysteine 201. Hemopexin repeat units lie at residues 55–95 (GWGF…WKDA), 96–140 (PSPV…FPGI), 141–185 (PFPL…SWPA), and 186–232 (VGNC…FMSC). Histidine 81 contributes to the heme binding site. Position 151 (histidine 151) interacts with heme. A glycan (N-linked (GlcNAc...) asparagine) is linked at asparagine 188. Asparagine 218 carries an N-linked (GlcNAc...) asparagine glycan. Histidine 237 contacts heme. Asparagine 241 is a glycosylation site (N-linked (GlcNAc...) asparagine). Intrachain disulfides connect cysteine 250/cysteine 453, cysteine 359/cysteine 401, and cysteine 411/cysteine 428. Hemopexin repeat units lie at residues 252–297 (PHLV…WPQG), 298–345 (PSTV…FGSP), 350–389 (LHSV…WTEL), and 393–444 (HTKV…LPQA). Histidine 286 is a binding site for heme.

This sequence belongs to the hemopexin family.

Its subcellular location is the secreted. In terms of biological role, binds heme and transports it to the liver for breakdown and iron recovery, after which the free hemopexin returns to the circulation. The polypeptide is Hemopexin (HPX) (Bos taurus (Bovine)).